A 625-amino-acid chain; its full sequence is TORTIFOLIA1-like protein 4 (625 aa).

The segment at 1–34 (MSVHGRFPASPPISLSPSSSSTSPSSQSPSTPPD) is disordered. Residues 12-29 (PISLSPSSSSTSPSSQSP) show a composition bias toward low complexity. HEAT repeat units lie at residues 69–106 (DSFS…YHGD), 110–147 (PHLA…HVTR), 149–186 (PFAS…AATD), 190–227 (EQLR…AGGA), and 230–268 (KPVL…AEDL). The tract at residues 391–466 (SVDNKGPHFT…VKNCKDDVEE (76 aa)) is disordered. 3 stretches are compositionally biased toward basic and acidic residues: residues 404-413 (KSSEETEEKA), 420-434 (IIKH…EDSK), and 455-466 (DSVKNCKDDVEE). S475 is modified (phosphoserine). A disordered region spans residues 582 to 625 (GMRESTDTNNGQRGGSVFQKRSRRDQFQDCMHTTLQKPTTRLST). A compositionally biased stretch (polar residues) spans 612–625 (MHTTLQKPTTRLST).

This Arabidopsis thaliana (Mouse-ear cress) protein is TORTIFOLIA1-like protein 4.